The chain runs to 321 residues: Thioredoxin reductase (321 aa).

FAD contacts are provided by residues 11 to 14 (SGPA), 40 to 41 (TA), glutamine 45, asparagine 54, cysteine 145, aspartate 288, and 295 to 297 (RQA). Residues cysteine 142 and cysteine 145 are joined by a disulfide bond.

Belongs to the class-II pyridine nucleotide-disulfide oxidoreductase family. As to quaternary structure, homodimer. FAD is required as a cofactor.

It is found in the cytoplasm. It carries out the reaction [thioredoxin]-dithiol + NADP(+) = [thioredoxin]-disulfide + NADPH + H(+). The polypeptide is Thioredoxin reductase (TRR1) (Debaryomyces hansenii (strain ATCC 36239 / CBS 767 / BCRC 21394 / JCM 1990 / NBRC 0083 / IGC 2968) (Yeast)).